The primary structure comprises 661 residues: 7-beta-hydroxy-3-oxochol-24-oyl-CoA 4-desaturase (661 aa).

Q104 lines the FMN pocket. Substrate is bound at residue 168 to 171; the sequence is HCAH. The active-site Proton donor is Y173. Residues R222, K298, and 320 to 321 contribute to the FMN site; that span reads GR. C344, C347, C351, and C363 together coordinate [4Fe-4S] cluster. Residues G394, E413, Q421, K431, and A458 each contribute to the FAD site.

This sequence in the N-terminal section; belongs to the NADH:flavin oxidoreductase/NADH oxidase family. Homotrimer. FMN is required as a cofactor. FAD serves as cofactor. Requires [4Fe-4S] cluster as cofactor.

The catalysed reaction is 7beta-hydroxy-3-oxochol-24-oyl-CoA + NAD(+) = 7beta-hydroxy-3-oxochol-4-en-24-oyl-CoA + NADH + H(+). It participates in lipid metabolism; bile acid degradation. Activity is inhibited by sulfhydryl-reactive compounds, acriflavine, o-phenanthroline and EDTA. Its function is as follows. NADH-dependent flavin oxidoreductase. Stereo-specific NAD(H)-dependent 3-oxo-delta4-cholenoic acid oxidoreductase involved in bile acid 7beta-dehydroxylation. The protein is 7-beta-hydroxy-3-oxochol-24-oyl-CoA 4-desaturase of Clostridium scindens (strain JCM 10418 / VPI 12708).